A 256-amino-acid chain; its full sequence is Small ribosomal subunit protein bS18m (256 aa).

Residues 19-106 (GQRTAQFSTT…GGQRYGSNSQ (88 aa)) are disordered. The span at 21–30 (RTAQFSTTSP) shows a compositional bias: polar residues. The span at 44-66 (NAPRTNTNTSSPSSNNNNNAGSS) shows a compositional bias: low complexity.

Belongs to the bacterial ribosomal protein bS18 family. In terms of assembly, component of the mitochondrial small ribosomal subunit (mt-SSU). Mature N.crassa 74S mitochondrial ribosomes consist of a small (37S) and a large (54S) subunit. The 37S small subunit contains a 16S ribosomal RNA (16S mt-rRNA) and 32 different proteins. The 54S large subunit contains a 23S rRNA (23S mt-rRNA) and 42 different proteins.

The protein localises to the mitochondrion. Functionally, component of the mitochondrial ribosome (mitoribosome), a dedicated translation machinery responsible for the synthesis of mitochondrial genome-encoded proteins, including at least some of the essential transmembrane subunits of the mitochondrial respiratory chain. The mitoribosomes are attached to the mitochondrial inner membrane and translation products are cotranslationally integrated into the membrane. This chain is Small ribosomal subunit protein bS18m (rsm18), found in Neurospora crassa (strain ATCC 24698 / 74-OR23-1A / CBS 708.71 / DSM 1257 / FGSC 987).